Here is a 90-residue protein sequence, read N- to C-terminus: UPF0237 protein NMB1653 (90 aa).

The region spanning 5–83 is the ACT domain; that stretch reads VITVIGKDRV…LDIRMQNEEI (79 aa).

Belongs to the UPF0237 family.

In Neisseria meningitidis serogroup B (strain ATCC BAA-335 / MC58), this protein is UPF0237 protein NMB1653.